A 387-amino-acid chain; its full sequence is Phosphoglycerate kinase (387 aa).

Substrate-binding positions include 21–23 (DLN), arginine 36, 59–62 (HLGR), arginine 113, and arginine 146. Residues lysine 197, glutamate 314, and 340 to 343 (GGDT) each bind ATP.

The protein belongs to the phosphoglycerate kinase family. Monomer.

Its subcellular location is the cytoplasm. The enzyme catalyses (2R)-3-phosphoglycerate + ATP = (2R)-3-phospho-glyceroyl phosphate + ADP. It participates in carbohydrate degradation; glycolysis; pyruvate from D-glyceraldehyde 3-phosphate: step 2/5. This chain is Phosphoglycerate kinase, found in Pseudomonas putida (strain GB-1).